A 492-amino-acid chain; its full sequence is Putative methyl-accepting chemotaxis AlkN (492 aa).

The next 2 helical transmembrane spans lie at 9–29 and 159–179; these read FFLI…GMRL and YVYF…FLLM. Positions 180–231 constitute an HAMP domain; that stretch reads KKTRSSIDEIVHVMNDMSRGDLTYRTIPSNDEVGKMQSSIIAMGAGVSALIE. The Methyl-accepting transducer domain maps to 236–472; it reads IQGDLFNSAG…DMLDNANIIR (237 aa).

Belongs to the methyl-accepting chemotaxis (MCP) protein family.

The protein localises to the membrane. It participates in hydrocarbon metabolism; alkane degradation. Its function is as follows. Chemotactic-signal transducers respond to changes in the concentration of attractants and repellents in the environment, transduce a signal from the outside to the inside of the cell, and facilitate sensory adaptation through the variation of the level of methylation. The polypeptide is Putative methyl-accepting chemotaxis AlkN (alkN) (Ectopseudomonas oleovorans (Pseudomonas oleovorans)).